The following is a 95-amino-acid chain: Aspartyl/glutamyl-tRNA(Asn/Gln) amidotransferase subunit C (95 aa).

This sequence belongs to the GatC family. Heterotrimer of A, B and C subunits.

It carries out the reaction L-glutamyl-tRNA(Gln) + L-glutamine + ATP + H2O = L-glutaminyl-tRNA(Gln) + L-glutamate + ADP + phosphate + H(+). It catalyses the reaction L-aspartyl-tRNA(Asn) + L-glutamine + ATP + H2O = L-asparaginyl-tRNA(Asn) + L-glutamate + ADP + phosphate + 2 H(+). Functionally, allows the formation of correctly charged Asn-tRNA(Asn) or Gln-tRNA(Gln) through the transamidation of misacylated Asp-tRNA(Asn) or Glu-tRNA(Gln) in organisms which lack either or both of asparaginyl-tRNA or glutaminyl-tRNA synthetases. The reaction takes place in the presence of glutamine and ATP through an activated phospho-Asp-tRNA(Asn) or phospho-Glu-tRNA(Gln). The sequence is that of Aspartyl/glutamyl-tRNA(Asn/Gln) amidotransferase subunit C from Brucella melitensis biotype 2 (strain ATCC 23457).